We begin with the raw amino-acid sequence, 401 residues long: Succinyl-diaminopimelate desuccinylase (401 aa).

Histidine 71 contributes to the Zn(2+) binding site. Residue aspartate 73 is part of the active site. A Zn(2+)-binding site is contributed by aspartate 104. Catalysis depends on glutamate 138, which acts as the Proton acceptor. Positions 139, 167, and 352 each coordinate Zn(2+).

Belongs to the peptidase M20A family. DapE subfamily. Homodimer. It depends on Zn(2+) as a cofactor. Requires Co(2+) as cofactor.

The catalysed reaction is N-succinyl-(2S,6S)-2,6-diaminopimelate + H2O = (2S,6S)-2,6-diaminopimelate + succinate. Its pathway is amino-acid biosynthesis; L-lysine biosynthesis via DAP pathway; LL-2,6-diaminopimelate from (S)-tetrahydrodipicolinate (succinylase route): step 3/3. Its function is as follows. Catalyzes the hydrolysis of N-succinyl-L,L-diaminopimelic acid (SDAP), forming succinate and LL-2,6-diaminopimelate (DAP), an intermediate involved in the bacterial biosynthesis of lysine and meso-diaminopimelic acid, an essential component of bacterial cell walls. The protein is Succinyl-diaminopimelate desuccinylase of Wolbachia sp. subsp. Brugia malayi (strain TRS).